A 274-amino-acid chain; its full sequence is Orotidine 5'-phosphate decarboxylase (274 aa).

The Proton donor role is filled by Lys95.

It belongs to the OMP decarboxylase family. Type 2 subfamily.

It carries out the reaction orotidine 5'-phosphate + H(+) = UMP + CO2. It functions in the pathway pyrimidine metabolism; UMP biosynthesis via de novo pathway; UMP from orotate: step 2/2. The protein is Orotidine 5'-phosphate decarboxylase (pyrF) of Mycobacterium bovis (strain ATCC BAA-935 / AF2122/97).